A 105-amino-acid polypeptide reads, in one-letter code: AAFALPALATSFEKDFITHETVQEILKKVGSNSNGMLDEQTISALTGKTIISNPLLEEALFKSSNSINALGGTFPCGESCVWIPCISKVIGCACKSKVCYKNSLA.

The signal sequence occupies residues 1-9 (AAFALPALA). Positions 10-71 (TSFEKDFITH…KSSNSINALG (62 aa)) are excised as a propeptide. Residues 72–102 (GTFPCGESCVWIPCISKVIGCACKSKVCYKN) constitute a cross-link (cyclopeptide (Gly-Asn)). Intrachain disulfides connect cysteine 76–cysteine 92, cysteine 80–cysteine 94, and cysteine 85–cysteine 99. A propeptide spanning residues 103 to 105 (SLA) is cleaved from the precursor.

In terms of processing, this is a cyclic peptide.

In terms of biological role, probably participates in a plant defense mechanism. This Viola biflora (Yellow wood violet) protein is Cyclotide vibi-J.